The following is a 91-amino-acid chain: Large ribosomal subunit protein uL23 (91 aa).

This sequence belongs to the universal ribosomal protein uL23 family. As to quaternary structure, part of the 50S ribosomal subunit. Contacts protein L29, and trigger factor when it is bound to the ribosome.

One of the early assembly proteins it binds 23S rRNA. One of the proteins that surrounds the polypeptide exit tunnel on the outside of the ribosome. Forms the main docking site for trigger factor binding to the ribosome. This Macrococcus caseolyticus (strain JCSC5402) (Macrococcoides caseolyticum) protein is Large ribosomal subunit protein uL23.